A 401-amino-acid chain; its full sequence is Nodulation protein E (401 aa).

The Ketosynthase family 3 (KS3) domain maps to 2–400; sequence DRRVVITGIG…GTNAVLAFRQ (399 aa). Residues Cys162, His294, and His331 each act as for beta-ketoacyl synthase activity in the active site. The helical transmembrane segment at 329-348 threads the bilayer; that stretch reads HAHCLGAASALEMIACVMAI.

It belongs to the thiolase-like superfamily. Beta-ketoacyl-ACP synthases family.

It localises to the cell inner membrane. Functionally, proposed to synthesize NOD factor fatty acyl chain. Involved in the synthesis of a highly unsaturated fatty acid moiety, which forms part of a lipo-oligosaccharide that is responsible for host specificity. The polypeptide is Nodulation protein E (nodE) (Rhizobium leguminosarum bv. trifolii).